A 306-amino-acid polypeptide reads, in one-letter code: UDP-3-O-acyl-N-acetylglucosamine deacetylase (306 aa).

H79, H238, and D242 together coordinate Zn(2+). The active-site Proton donor is H265.

Belongs to the LpxC family. The cofactor is Zn(2+).

It catalyses the reaction a UDP-3-O-[(3R)-3-hydroxyacyl]-N-acetyl-alpha-D-glucosamine + H2O = a UDP-3-O-[(3R)-3-hydroxyacyl]-alpha-D-glucosamine + acetate. The protein operates within glycolipid biosynthesis; lipid IV(A) biosynthesis; lipid IV(A) from (3R)-3-hydroxytetradecanoyl-[acyl-carrier-protein] and UDP-N-acetyl-alpha-D-glucosamine: step 2/6. Its function is as follows. Catalyzes the hydrolysis of UDP-3-O-myristoyl-N-acetylglucosamine to form UDP-3-O-myristoylglucosamine and acetate, the committed step in lipid A biosynthesis. This chain is UDP-3-O-acyl-N-acetylglucosamine deacetylase, found in Shewanella sediminis (strain HAW-EB3).